A 184-amino-acid polypeptide reads, in one-letter code: Ribosome maturation factor RimP (184 aa).

Belongs to the RimP family.

Its subcellular location is the cytoplasm. Its function is as follows. Required for maturation of 30S ribosomal subunits. The sequence is that of Ribosome maturation factor RimP from Corynebacterium diphtheriae (strain ATCC 700971 / NCTC 13129 / Biotype gravis).